A 1356-amino-acid chain; its full sequence is DNA-directed RNA polymerase subunit beta (1356 aa).

Belongs to the RNA polymerase beta chain family. As to quaternary structure, the RNAP catalytic core consists of 2 alpha, 1 beta, 1 beta' and 1 omega subunit. When a sigma factor is associated with the core the holoenzyme is formed, which can initiate transcription.

The catalysed reaction is RNA(n) + a ribonucleoside 5'-triphosphate = RNA(n+1) + diphosphate. DNA-dependent RNA polymerase catalyzes the transcription of DNA into RNA using the four ribonucleoside triphosphates as substrates. This chain is DNA-directed RNA polymerase subunit beta, found in Phenylobacterium zucineum (strain HLK1).